The chain runs to 1065 residues: Putative guanine nucleotide-exchange factor SED4 (1065 aa).

Residues 1-346 (MSGNSANYDV…SSSILRNIWK (346 aa)) are Cytoplasmic-facing. The residue at position 65 (S65) is a Phosphoserine. WD repeat units follow at residues 259-298 (FDLN…LVQL) and 302-341 (VHES…SSIL). The chain crosses the membrane as a helical; Signal-anchor for type II membrane protein span at residues 347–365 (FFLNFVLLVVLAGAIQLGY). Residues 366–1065 (KHNVHGFIYK…VNYAGLHDEL (700 aa)) lie on the Lumenal side of the membrane. An N-linked (GlcNAc...) asparagine glycan is attached at N388. 3 disordered regions span residues 458–477 (TSAD…SSSF), 482–520 (VTNE…SESI), and 551–625 (QSES…SFLD). The segment covering 465–476 (SASSSSSSSSSS) has biased composition (low complexity). A compositionally biased stretch (polar residues) spans 482 to 495 (VTNEPIVSSPTSEI). Low complexity predominate over residues 568–621 (STESPSLSHMPSSSSSSLSLSSSLTTSPTTALSTSTATAVTTTQTNPTNDAANT). N620 is a glycosylation site (N-linked (GlcNAc...) asparagine). Repeat copies occupy residues 824–833 (IDNSEYTSVL), 834–843 (ADNLEPTSVL), 844–853 (ADNSEPTSVL), and 854–863 (ADSSEPTSVF). Positions 824-863 (IDNSEYTSVLADNLEPTSVLADNSEPTSVLADSSEPTSVF) are 4 X 10 AA tandem repeats. An N-linked (GlcNAc...) asparagine glycan is attached at N1039. The Prevents secretion from ER signature appears at 1062-1065 (HDEL).

It belongs to the WD repeat SEC12 family.

Its subcellular location is the endoplasmic reticulum membrane. It localises to the golgi apparatus membrane. Its function is as follows. Putative guanine nucleotide-exchange factor (GEF) involved in the formation or budding of transport vesicles from the ER. Positive regulator of SAR1 probably through inhibition of the GTPase activation by SEC23. The chain is Putative guanine nucleotide-exchange factor SED4 (SED4) from Saccharomyces cerevisiae (strain ATCC 204508 / S288c) (Baker's yeast).